The following is a 166-amino-acid chain: uncharacterized protein (166 aa).

In terms of biological role, this protein may be involved in virus assembly. Essential for virus function. This is an uncharacterized protein from Sulfolobus spindle-shape virus 1 (SSV1).